Consider the following 227-residue polypeptide: Glutathione S-transferase U17 (227 aa).

One can recognise a GST N-terminal domain in the interval 4–83 (SDVKLIGAWA…YIDDTWSSSG (80 aa)). Residues 14–15 (SP), 40–41 (SK), 54–55 (KI), and 67–68 (ES) each bind glutathione. Residues 90–222 (DPYDRAMARF…KLAEFAKKIF (133 aa)) enclose the GST C-terminal domain.

It belongs to the GST superfamily. Tau family.

The protein localises to the cytoplasm. The protein resides in the cytosol. It carries out the reaction RX + glutathione = an S-substituted glutathione + a halide anion + H(+). In terms of biological role, involved in light signaling, mainly phyA-mediated photomorphogenesis and in the integration of various phytohormone signals to modulate various aspects of plant development by affecting glutathione pools. In vitro, possesses glutathione S-transferase activity toward 1-chloro-2,4-dinitrobenzene (CDNB) and benzyl isothiocyanate (BITC). This Arabidopsis thaliana (Mouse-ear cress) protein is Glutathione S-transferase U17 (GSTU17).